The chain runs to 343 residues: Holliday junction branch migration complex subunit RuvB (343 aa).

A disordered region spans residues 1–23; it reads MSDDFEVVRPEEQAGDEKDRDLR. Residues 1 to 183 form a large ATPase domain (RuvB-L) region; that stretch reads MSDDFEVVRP…FGIVQRFEFY (183 aa). ATP contacts are provided by residues L22, R23, G64, K67, T68, T69, 130–132, R173, Y183, and R220; that span reads EDY. T68 is a Mg(2+) binding site. Residues 184 to 254 form a small ATPAse domain (RuvB-S) region; sequence SHEELASIIS…TVAAGLKQLN (71 aa). The head domain (RuvB-H) stretch occupies residues 257-343; it reads GLGLETYDRQ…LGDGQEGLFD (87 aa). The DNA site is built by R312 and R317.

The protein belongs to the RuvB family. As to quaternary structure, homohexamer. Forms an RuvA(8)-RuvB(12)-Holliday junction (HJ) complex. HJ DNA is sandwiched between 2 RuvA tetramers; dsDNA enters through RuvA and exits via RuvB. An RuvB hexamer assembles on each DNA strand where it exits the tetramer. Each RuvB hexamer is contacted by two RuvA subunits (via domain III) on 2 adjacent RuvB subunits; this complex drives branch migration. In the full resolvosome a probable DNA-RuvA(4)-RuvB(12)-RuvC(2) complex forms which resolves the HJ.

The protein resides in the cytoplasm. It catalyses the reaction ATP + H2O = ADP + phosphate + H(+). Functionally, the RuvA-RuvB-RuvC complex processes Holliday junction (HJ) DNA during genetic recombination and DNA repair, while the RuvA-RuvB complex plays an important role in the rescue of blocked DNA replication forks via replication fork reversal (RFR). RuvA specifically binds to HJ cruciform DNA, conferring on it an open structure. The RuvB hexamer acts as an ATP-dependent pump, pulling dsDNA into and through the RuvAB complex. RuvB forms 2 homohexamers on either side of HJ DNA bound by 1 or 2 RuvA tetramers; 4 subunits per hexamer contact DNA at a time. Coordinated motions by a converter formed by DNA-disengaged RuvB subunits stimulates ATP hydrolysis and nucleotide exchange. Immobilization of the converter enables RuvB to convert the ATP-contained energy into a lever motion, pulling 2 nucleotides of DNA out of the RuvA tetramer per ATP hydrolyzed, thus driving DNA branch migration. The RuvB motors rotate together with the DNA substrate, which together with the progressing nucleotide cycle form the mechanistic basis for DNA recombination by continuous HJ branch migration. Branch migration allows RuvC to scan DNA until it finds its consensus sequence, where it cleaves and resolves cruciform DNA. This Treponema denticola (strain ATCC 35405 / DSM 14222 / CIP 103919 / JCM 8153 / KCTC 15104) protein is Holliday junction branch migration complex subunit RuvB.